Here is a 398-residue protein sequence, read N- to C-terminus: L-glutamine--4-(methylsulfanyl)-2-oxobutanoate aminotransferase (398 aa).

N6-(pyridoxal phosphate)lysine is present on Lys-240.

It belongs to the class-I pyridoxal-phosphate-dependent aminotransferase family. MtnE subfamily. It depends on pyridoxal 5'-phosphate as a cofactor.

The enzyme catalyses 4-methylsulfanyl-2-oxobutanoate + L-glutamine = 2-oxoglutaramate + L-methionine. It functions in the pathway amino-acid biosynthesis; L-methionine biosynthesis via salvage pathway; L-methionine from S-methyl-5-thio-alpha-D-ribose 1-phosphate: step 6/6. Involved in the methylthioribose (MTR) recycling pathway. Catalyzes the formation of methionine from 2-keto-4-methylthiobutyrate (KMTB). The sequence is that of L-glutamine--4-(methylsulfanyl)-2-oxobutanoate aminotransferase from Bacillus subtilis (strain 168).